The primary structure comprises 952 residues: UvrABC system protein A (952 aa).

38-45 is a binding site for ATP; that stretch reads GLSGSGKS. The segment at 258–285 adopts a C4-type zinc-finger fold; that stretch reads CNECGFSIPELEPRFFSFNSPVGACKSC. 2 ABC transporter domains span residues 315–596 and 616–945; these read FRSV…KKSI and GNGK…LFLE. 648–655 provides a ligand contact to ATP; it reads GVSGSGKS. A C4-type zinc finger spans residues 747 to 773; it reads CENCSGDGLIKIEMHFLPDVFVKCESC.

It belongs to the ABC transporter superfamily. UvrA family. In terms of assembly, forms a heterotetramer with UvrB during the search for lesions.

The protein resides in the cytoplasm. In terms of biological role, the UvrABC repair system catalyzes the recognition and processing of DNA lesions. UvrA is an ATPase and a DNA-binding protein. A damage recognition complex composed of 2 UvrA and 2 UvrB subunits scans DNA for abnormalities. When the presence of a lesion has been verified by UvrB, the UvrA molecules dissociate. The sequence is that of UvrABC system protein A from Malacoplasma penetrans (strain HF-2) (Mycoplasma penetrans).